Here is a 252-residue protein sequence, read N- to C-terminus: Triosephosphate isomerase (252 aa).

Substrate is bound at residue 9–11 (NWK). His-100 (electrophile) is an active-site residue. Residue Glu-171 is the Proton acceptor of the active site. Substrate contacts are provided by residues Gly-177, Ser-216, and 237–238 (GG).

This sequence belongs to the triosephosphate isomerase family. Homodimer.

Its subcellular location is the cytoplasm. It carries out the reaction D-glyceraldehyde 3-phosphate = dihydroxyacetone phosphate. The protein operates within carbohydrate biosynthesis; gluconeogenesis. It participates in carbohydrate degradation; glycolysis; D-glyceraldehyde 3-phosphate from glycerone phosphate: step 1/1. Its function is as follows. Involved in the gluconeogenesis. Catalyzes stereospecifically the conversion of dihydroxyacetone phosphate (DHAP) to D-glyceraldehyde-3-phosphate (G3P). The chain is Triosephosphate isomerase from Polynucleobacter necessarius subsp. necessarius (strain STIR1).